A 129-amino-acid polypeptide reads, in one-letter code: Large ribosomal subunit protein uL22 (129 aa).

This sequence belongs to the universal ribosomal protein uL22 family. In terms of assembly, part of the 50S ribosomal subunit.

Functionally, this protein binds specifically to 23S rRNA; its binding is stimulated by other ribosomal proteins, e.g. L4, L17, and L20. It is important during the early stages of 50S assembly. It makes multiple contacts with different domains of the 23S rRNA in the assembled 50S subunit and ribosome. In terms of biological role, the globular domain of the protein is located near the polypeptide exit tunnel on the outside of the subunit, while an extended beta-hairpin is found that lines the wall of the exit tunnel in the center of the 70S ribosome. The sequence is that of Large ribosomal subunit protein uL22 from Sinorhizobium medicae (strain WSM419) (Ensifer medicae).